The primary structure comprises 361 residues: MERVNGEDIWQDREIRFDVDHKLLRLINGEIQVAKIEHVEDTKGNNGDRGTMRVTNLRLIWHAASMPRINITIGWNAITGVQSKQTTSLVTRNRGISNEAIYVLAKVSATTTKFEFIFTTTNPASHSKLFNTISSISRAYETTKMYRELKMRGVFIREDGTLKILPQETIIEKVNGVWNLSTETGSLGVFVITNIRVVWYAEMNIGYNVSVPYITLYSVRVRESKFGMALVLETTTSSGEYVLGFRVDPAERLQNLLKTVQSLHKAHLLKPIFGVSYVKEIAEKVEPRKDDDEIDIIDNNEDDVEIDDKIRPDAFASYFDGEHTATDEKQLPVLNPELGLAIEPIRNGFTLHDLWNIHVDV.

This sequence belongs to the BBS5 family. Part of BBSome complex, that contains at least bbs-1, bbs-2, bbs-4, bbs-5, osm-12, bbs-8/ttc-8 and bbs-9. Interacts with bbs-4 (via C-terminus); the interaction is direct.

The protein resides in the cell projection. The protein localises to the cilium membrane. It is found in the cytoplasm. It localises to the cytoskeleton. Its subcellular location is the cilium basal body. The protein resides in the microtubule organizing center. The protein localises to the centrosome. It is found in the centriolar satellite. Component of the BBSome complex. The BBSome complex is thought to function as a coat complex required for sorting of specific membrane proteins to the primary cilia. The BBSome complex is required for ciliogenesis but is dispensable for centriolar satellite function. Required for BBSome complex ciliary localization but not for the proper complex assembly. Required, redundantly with bbs-4, for cilia biogenesis and both the assembly and movement of intraflagellar transport proteins along the ciliary axoneme. Plays a role in the removal of degraded mechanosensory receptors within the cilia. The polypeptide is BBSome complex member bbs-5 (Caenorhabditis elegans).